Here is a 164-residue protein sequence, read N- to C-terminus: Peroxynitrite isomerase (164 aa).

The GXWXGXG signature appears at 21 to 27 (GRWGGRG). Residues Lys130 and His156 each contribute to the heme b site.

The protein belongs to the nitrobindin family. As to quaternary structure, homodimer. The cofactor is heme b.

The catalysed reaction is peroxynitrite = nitrate. The protein operates within nitrogen metabolism. Functionally, heme-binding protein able to scavenge peroxynitrite and to protect free L-tyrosine against peroxynitrite-mediated nitration, by acting as a peroxynitrite isomerase that converts peroxynitrite to nitrate. Therefore, this protein likely plays a role in peroxynitrite sensing and in the detoxification of reactive nitrogen and oxygen species (RNS and ROS, respectively). Is able to bind nitric oxide (NO) in vitro, but may act as a sensor of peroxynitrite levels in vivo. In Nocardioides sp. (strain ATCC BAA-499 / JS614), this protein is Peroxynitrite isomerase.